An 83-amino-acid chain; its full sequence is Heterin-1 (83 aa).

Positions 1-22 (MNGKLLLVSLMVTMLVMQPAEA) are cleaved as a signal peptide. Residues 66–83 (VAGQIPFDEFMDILHYRP) constitute a propeptide that is removed on maturation.

Belongs to the non-disulfide-bridged peptide (NDBP) superfamily. Long chain multifunctional peptide (group 2) family. As to expression, expressed by the venom gland.

It localises to the secreted. Its subcellular location is the target cell membrane. Amphipathic peptide with potent activities against both Gram-positive and Gram-negative bacteria. Is the most active against the two Gram-positive Bacillus megaterium and Micrococcus luteus (MIC=4.0 uM for both). It has relatively low hemolytic activity against human erythrocytes. In Heterometrus spinifer (Asia giant forest scorpion), this protein is Heterin-1.